The chain runs to 357 residues: S-adenosylmethionine:tRNA ribosyltransferase-isomerase (357 aa).

This sequence belongs to the QueA family. As to quaternary structure, monomer.

Its subcellular location is the cytoplasm. It catalyses the reaction 7-aminomethyl-7-carbaguanosine(34) in tRNA + S-adenosyl-L-methionine = epoxyqueuosine(34) in tRNA + adenine + L-methionine + 2 H(+). It participates in tRNA modification; tRNA-queuosine biosynthesis. Its function is as follows. Transfers and isomerizes the ribose moiety from AdoMet to the 7-aminomethyl group of 7-deazaguanine (preQ1-tRNA) to give epoxyqueuosine (oQ-tRNA). This is S-adenosylmethionine:tRNA ribosyltransferase-isomerase from Buchnera aphidicola subsp. Schizaphis graminum (strain Sg).